Consider the following 120-residue polypeptide: Ribonuclease P protein component (120 aa).

This sequence belongs to the RnpA family. Consists of a catalytic RNA component (M1 or rnpB) and a protein subunit.

It catalyses the reaction Endonucleolytic cleavage of RNA, removing 5'-extranucleotides from tRNA precursor.. RNaseP catalyzes the removal of the 5'-leader sequence from pre-tRNA to produce the mature 5'-terminus. It can also cleave other RNA substrates such as 4.5S RNA. The protein component plays an auxiliary but essential role in vivo by binding to the 5'-leader sequence and broadening the substrate specificity of the ribozyme. This chain is Ribonuclease P protein component, found in Chlamydia trachomatis serovar A (strain ATCC VR-571B / DSM 19440 / HAR-13).